The primary structure comprises 330 residues: Free fatty acid receptor 2 (330 aa).

Over methionine 1–methionine 12 the chain is Extracellular. Residues alanine 13–valine 33 form a helical membrane-spanning segment. Residues glycine 34–proline 41 lie on the Cytoplasmic side of the membrane. The helical transmembrane segment at alanine 42–leucine 62 threads the bilayer. Residues proline 63–leucine 84 are Extracellular-facing. The chain crosses the membrane as a helical span at residues threonine 85–isoleucine 105. Over glutamate 106–glycine 126 the chain is Cytoplasmic. A helical transmembrane segment spans residues valine 127–valine 147. Over glutamine 148 to leucine 173 the chain is Extracellular. N-linked (GlcNAc...) asparagine glycosylation is found at asparagine 151 and asparagine 167. A helical membrane pass occupies residues aspartate 174–valine 194. The Cytoplasmic portion of the chain corresponds to threonine 195–arginine 219. The chain crosses the membrane as a helical span at residues alanine 220 to valine 240. The Extracellular portion of the chain corresponds to serine 241–arginine 255. Residues serine 256 to serine 276 form a helical membrane-spanning segment. Residues serine 277 to glutamate 330 lie on the Cytoplasmic side of the membrane. The segment at leucine 299 to glutamate 330 is disordered. Residues arginine 302–glycine 315 show a composition bias toward basic and acidic residues.

It belongs to the G-protein coupled receptor 1 family. Interacts with FCN1 (via Fibrinogen C-terminal domain). Expressed at relatively high levels in peripheral blood leukocytes and, to lesser extent, in spleen.

It localises to the cell membrane. Its function is as follows. G protein-coupled receptor that is activated by a major product of dietary fiber digestion, the short chain fatty acids (SCFAs), and that plays a role in the regulation of whole-body energy homeostasis and in intestinal immunity. In omnivorous mammals, the short chain fatty acids acetate, propionate and butyrate are produced primarily by the gut microbiome that metabolizes dietary fibers. SCFAs serve as a source of energy but also act as signaling molecules. That G protein-coupled receptor is probably coupled to the pertussis toxin-sensitive, G(i/o)-alpha family of G proteins but also to the Gq family. Its activation results in the formation of inositol 1,4,5-trisphosphate, the mobilization of intracellular calcium, the phosphorylation of the MAPK3/ERK1 and MAPK1/ERK2 kinases and the inhibition of intracellular cAMP accumulation. May play a role in glucose homeostasis by regulating the secretion of GLP-1, in response to short-chain fatty acids accumulating in the intestine. May also regulate the production of LEP/Leptin, a hormone acting on the central nervous system to inhibit food intake. Finally, may also regulate whole-body energy homeostasis through adipogenesis regulating both differentiation and lipid storage of adipocytes. In parallel to its role in energy homeostasis, may also mediate the activation of the inflammatory and immune responses by SCFA in the intestine, regulating the rapid production of chemokines and cytokines. May also play a role in the resolution of the inflammatory response and control chemotaxis in neutrophils. In addition to SCFAs, may also be activated by the extracellular lectin FCN1 in a process leading to activation of monocytes and inducing the secretion of interleukin-8/IL-8 in response to the presence of microbes. Among SCFAs, the fatty acids containing less than 6 carbons, the most potent activators are probably acetate, propionate and butyrate. Exhibits a SCFA-independent constitutive G protein-coupled receptor activity. The sequence is that of Free fatty acid receptor 2 (FFAR2) from Homo sapiens (Human).